Reading from the N-terminus, the 258-residue chain is Ribonuclease PH (258 aa).

Residues Arg-86 and 124-126 (GTR) contribute to the phosphate site.

This sequence belongs to the RNase PH family. As to quaternary structure, homohexameric ring arranged as a trimer of dimers.

The enzyme catalyses tRNA(n+1) + phosphate = tRNA(n) + a ribonucleoside 5'-diphosphate. In terms of biological role, phosphorolytic 3'-5' exoribonuclease that plays an important role in tRNA 3'-end maturation. Removes nucleotide residues following the 3'-CCA terminus of tRNAs; can also add nucleotides to the ends of RNA molecules by using nucleoside diphosphates as substrates, but this may not be physiologically important. Probably plays a role in initiation of 16S rRNA degradation (leading to ribosome degradation) during starvation. The protein is Ribonuclease PH of Caldicellulosiruptor saccharolyticus (strain ATCC 43494 / DSM 8903 / Tp8T 6331).